Reading from the N-terminus, the 251-residue chain is Mycofactocin precursor peptide peptidase (251 aa).

A divalent metal cation-binding residues include glutamate 38, histidine 40, aspartate 49, histidine 128, and glutamate 167.

Belongs to the creatininase superfamily. Homooctamer. Fe(2+) is required as a cofactor. Requires Zn(2+) as cofactor.

It catalyses the reaction [mycofactocin precursor peptide]-C-terminal glycyl-N-{5-[(4-hydroxyphenyl)methyl]-4,4-dimethyl-2-oxopyrrolidin-3-yl}acetamide + H2O = [mycofactocin precursor peptide]-C-terminal glycine + 3-amino-5-[(4-hydroxyphenyl)methyl]-4,4-dimethyl-2-pyrrolidin-2-one. Functionally, peptidase involved in the biosynthesis of the enzyme cofactor mycofactocin (MFT). Catalyzes cleavage of the MftC-modified MftA peptide to liberate its final two residues, which consist of a cross-linked valine-decarboxylated tyrosine dipeptide (named 3-amino-5-[(4-hydroxyphenyl)methyl]-4,4-dimethyl-2-pyrrolidin-2-one or ADHP). This Mycobacterium tuberculosis (strain CDC 1551 / Oshkosh) protein is Mycofactocin precursor peptide peptidase (mftE).